The sequence spans 541 residues: Zinc finger protein 503 (541 aa).

The segment covering 1–18 (MSNSPLGSGSRISHFTTE) has biased composition (polar residues). Disordered regions lie at residues 1–49 (MSNS…QAGR) and 97–255 (TCSQ…SSSV). Residues 137 to 157 (AEDKSSFKPYSKHPDKKDQSA) are compositionally biased toward basic and acidic residues. The segment covering 236–255 (SLSAAPSPTPASSSSSSSSV) has biased composition (low complexity). Residues 411 to 439 (HVCNWVSATGPCDKRFSSSEELLGHLRTH) form a C2H2-type zinc finger. Positions 474–511 (GASPGPLTLRSPHHHPLGLSSSRYHPYSKSPLPSGGAP) are disordered.

The protein belongs to the Elbow/Noc family.

The protein localises to the nucleus. May function as a transcriptional repressor. The chain is Zinc finger protein 503 (znf503) from Xenopus tropicalis (Western clawed frog).